Reading from the N-terminus, the 299-residue chain is GTPase Era (299 aa).

Positions 4-171 (KSGFVAILGR…IKLLTDNLEE (168 aa)) constitute an Era-type G domain. Residues 12–19 (GRPNVGKS) form a G1 region. 12-19 (GRPNVGKS) serves as a coordination point for GTP. The G2 stretch occupies residues 38 to 42 (QTTRN). The interval 59–62 (DTPG) is G3. Residues 59 to 63 (DTPGI) and 121 to 124 (NKID) each bind GTP. The segment at 121 to 124 (NKID) is G4. Residues 150–152 (ISA) form a G5 region. A KH type-2 domain is found at 202 to 280 (TQQEVPHSVA…YLETWVKVKK (79 aa)).

This sequence belongs to the TRAFAC class TrmE-Era-EngA-EngB-Septin-like GTPase superfamily. Era GTPase family. Monomer.

The protein localises to the cytoplasm. The protein resides in the cell membrane. Its function is as follows. An essential GTPase that binds both GDP and GTP, with rapid nucleotide exchange. Plays a role in 16S rRNA processing and 30S ribosomal subunit biogenesis and possibly also in cell cycle regulation and energy metabolism. The chain is GTPase Era from Streptococcus agalactiae serotype III (strain NEM316).